The chain runs to 143 residues: Protein SLC31A2 (143 aa).

Topologically, residues M1–S22 are extracellular. The chain crosses the membrane as a helical span at residues P23–I43. At K44–H93 the chain is on the cytoplasmic side. The residue at position 77 (S77) is a Phosphoserine. Residues F94–V114 form a helical membrane-spanning segment. Topologically, residues M115–T119 are extracellular. A helical transmembrane segment spans residues W120–L140. Residues S141–A143 lie on the Cytoplasmic side of the membrane.

It belongs to the copper transporter (Ctr) (TC 1.A.56) family. SLC31A subfamily. Oligomer. Interacts with SLC31A1; this interaction stabilizes SLC31A2 and protects it from ubiquitination and the subsequent degradation. In terms of processing, ubiquitinated; ubiquitination and the subsequent proteasomal degradation are prevent by SLC31A1 that stabilizes it. In terms of tissue distribution, ubiquitous with high expression in placenta and heart.

The protein resides in the membrane. Its subcellular location is the cytoplasmic vesicle membrane. The protein localises to the late endosome membrane. It is found in the lysosome membrane. Functionally, does not function as a copper(1+) importer in vivo. However, in vitro functions as a low-affinity copper(1+) importer. Regulator of SLC31A1 which facilitates the cleavage of the SLC31A1 ecto-domain or which stabilizes the truncated form of SLC31A1 (Truncated CTR1 form), thereby drives the SLC31A1 truncated form-dependent endosomal copper export and modulates the copper and cisplatin accumulation via SLC31A1. This Homo sapiens (Human) protein is Protein SLC31A2.